Reading from the N-terminus, the 151-residue chain is UPF0208 membrane protein YfbV (151 aa).

Transmembrane regions (helical) follow at residues 46–65 and 69–91; these read YAIRFMPPVAVFTLCWQIAL and LGPAVATALFALSLPMQGLWWLG.

It belongs to the UPF0208 family.

It is found in the cell inner membrane. The protein is UPF0208 membrane protein YfbV of Salmonella choleraesuis (strain SC-B67).